Consider the following 439-residue polypeptide: Ribosomal protein uS12 methylthiotransferase RimO (439 aa).

Residues 6 to 116 (GKVGFVSLGC…VMNQVHQVAP (111 aa)) form the MTTase N-terminal domain. Cys15, Cys51, Cys80, Cys148, Cys152, and Cys155 together coordinate [4Fe-4S] cluster. Positions 134–371 (LTPKHYAYLK…MEVQQRISAS (238 aa)) constitute a Radical SAM core domain. One can recognise a TRAM domain in the interval 374–439 (QAKIGKRMDV…DEYDLWGRPV (66 aa)).

It belongs to the methylthiotransferase family. RimO subfamily. It depends on [4Fe-4S] cluster as a cofactor.

It localises to the cytoplasm. The enzyme catalyses L-aspartate(89)-[ribosomal protein uS12]-hydrogen + (sulfur carrier)-SH + AH2 + 2 S-adenosyl-L-methionine = 3-methylsulfanyl-L-aspartate(89)-[ribosomal protein uS12]-hydrogen + (sulfur carrier)-H + 5'-deoxyadenosine + L-methionine + A + S-adenosyl-L-homocysteine + 2 H(+). In terms of biological role, catalyzes the methylthiolation of an aspartic acid residue of ribosomal protein uS12. In Hahella chejuensis (strain KCTC 2396), this protein is Ribosomal protein uS12 methylthiotransferase RimO.